The chain runs to 1538 residues: Ferredoxin-dependent glutamate synthase (1538 aa).

The active-site For GATase activity is cysteine 34. The region spanning 34 to 431 is the Glutamine amidotransferase type-2 domain; sequence CGVGFIADVN…PGQMISVDIF (398 aa). 1109 to 1166 provides a ligand contact to FMN; the sequence is LSEVHQLLAENQLRDRVTLRVDGGLRTGSDIVLAAIMGAEEFGFGTVAMIATGCIMAR. 3 residues coordinate [3Fe-4S] cluster: cysteine 1162, cysteine 1168, and cysteine 1173.

The protein belongs to the glutamate synthase family. As to quaternary structure, monomer. [3Fe-4S] cluster serves as cofactor. It depends on FAD as a cofactor. FMN is required as a cofactor.

It localises to the plastid. Its subcellular location is the chloroplast stroma. It catalyses the reaction 2 oxidized [2Fe-2S]-[ferredoxin] + 2 L-glutamate = L-glutamine + 2 reduced [2Fe-2S]-[ferredoxin] + 2-oxoglutarate + 2 H(+). It participates in amino-acid biosynthesis; L-glutamate biosynthesis via GLT pathway; L-glutamate from 2-oxoglutarate and L-glutamine (ferredoxin route): step 1/1. Its pathway is energy metabolism; nitrogen metabolism. The chain is Ferredoxin-dependent glutamate synthase (gltB) from Pyropia yezoensis (Susabi-nori).